The primary structure comprises 311 residues: Pyrimidine-specific ribonucleoside hydrolase RihA (311 aa).

The active site involves His-240.

It belongs to the IUNH family. RihA subfamily.

Its function is as follows. Hydrolyzes with equal efficiency cytidine or uridine to ribose and cytosine or uracil, respectively. In Escherichia coli O127:H6 (strain E2348/69 / EPEC), this protein is Pyrimidine-specific ribonucleoside hydrolase RihA.